The following is a 957-amino-acid chain: Glycine dehydrogenase (decarboxylating) 2 (957 aa).

Lys-707 is modified (N6-(pyridoxal phosphate)lysine).

It belongs to the GcvP family. As to quaternary structure, the glycine cleavage system is composed of four proteins: P, T, L and H. Pyridoxal 5'-phosphate is required as a cofactor.

It catalyses the reaction N(6)-[(R)-lipoyl]-L-lysyl-[glycine-cleavage complex H protein] + glycine + H(+) = N(6)-[(R)-S(8)-aminomethyldihydrolipoyl]-L-lysyl-[glycine-cleavage complex H protein] + CO2. Functionally, the glycine cleavage system catalyzes the degradation of glycine. The P protein binds the alpha-amino group of glycine through its pyridoxal phosphate cofactor; CO(2) is released and the remaining methylamine moiety is then transferred to the lipoamide cofactor of the H protein. This chain is Glycine dehydrogenase (decarboxylating) 2, found in Pseudomonas fluorescens (strain Pf0-1).